Here is a 65-residue protein sequence, read N- to C-terminus: Prokaryotic ubiquitin-like protein Pup (65 aa).

The span at 1 to 14 shows a compositional bias: basic and acidic residues; sequence MSGHEQQRPSRREE. Residues 1-35 are disordered; the sequence is MSGHEQQRPSRREEDVEETPVVPAQAGAQAKESDA. Residues 21–59 form an ARC ATPase binding region; the sequence is VVPAQAGAQAKESDADVDALLDEIDEVLESNSEEFVRGF. Positions 26–49 form a coiled coil; the sequence is AGAQAKESDADVDALLDEIDEVLE. Glutamine 65 is modified (deamidated glutamine). An Isoglutamyl lysine isopeptide (Gln-Lys) (interchain with K-? in acceptor proteins) cross-link involves residue glutamine 65.

This sequence belongs to the prokaryotic ubiquitin-like protein family. Strongly interacts with the proteasome-associated ATPase ARC through a hydrophobic interface; the interacting region of Pup lies in its C-terminal half. There is one Pup binding site per ARC hexamer ring. Post-translationally, is modified by deamidation of its C-terminal glutamine to glutamate by the deamidase Dop, a prerequisite to the subsequent pupylation process.

Its pathway is protein degradation; proteasomal Pup-dependent pathway. In terms of biological role, protein modifier that is covalently attached to lysine residues of substrate proteins, thereby targeting them for proteasomal degradation. The tagging system is termed pupylation. This Kineococcus radiotolerans (strain ATCC BAA-149 / DSM 14245 / SRS30216) protein is Prokaryotic ubiquitin-like protein Pup.